The primary structure comprises 529 residues: Bifunctional purine biosynthesis protein PurH (529 aa).

One can recognise an MGS-like domain in the interval 1 to 148 (MNNVRPIRRA…KNHKDTTIVV (148 aa)).

The protein belongs to the PurH family.

It carries out the reaction (6R)-10-formyltetrahydrofolate + 5-amino-1-(5-phospho-beta-D-ribosyl)imidazole-4-carboxamide = 5-formamido-1-(5-phospho-D-ribosyl)imidazole-4-carboxamide + (6S)-5,6,7,8-tetrahydrofolate. The enzyme catalyses IMP + H2O = 5-formamido-1-(5-phospho-D-ribosyl)imidazole-4-carboxamide. Its pathway is purine metabolism; IMP biosynthesis via de novo pathway; 5-formamido-1-(5-phospho-D-ribosyl)imidazole-4-carboxamide from 5-amino-1-(5-phospho-D-ribosyl)imidazole-4-carboxamide (10-formyl THF route): step 1/1. The protein operates within purine metabolism; IMP biosynthesis via de novo pathway; IMP from 5-formamido-1-(5-phospho-D-ribosyl)imidazole-4-carboxamide: step 1/1. The sequence is that of Bifunctional purine biosynthesis protein PurH from Shewanella frigidimarina (strain NCIMB 400).